The chain runs to 548 residues: Chaperonin GroEL (548 aa).

ATP contacts are provided by residues 30-33, K51, 87-91, G415, 479-481, and D495; these read TLGP, DGTTT, and NAA. The tract at residues 525-548 is disordered; it reads PKEDKTSDASSSPAGGMGGMGGMM. A compositionally biased stretch (gly residues) spans 539–548; that stretch reads GGMGGMGGMM.

It belongs to the chaperonin (HSP60) family. Forms a cylinder of 14 subunits composed of two heptameric rings stacked back-to-back. Interacts with the co-chaperonin GroES.

The protein resides in the cytoplasm. The catalysed reaction is ATP + H2O + a folded polypeptide = ADP + phosphate + an unfolded polypeptide.. Together with its co-chaperonin GroES, plays an essential role in assisting protein folding. The GroEL-GroES system forms a nano-cage that allows encapsulation of the non-native substrate proteins and provides a physical environment optimized to promote and accelerate protein folding. The sequence is that of Chaperonin GroEL from Buchnera aphidicola subsp. Rhopalosiphum padi.